The sequence spans 339 residues: Autophagy protein 5 (339 aa).

A Glycyl lysine isopeptide (Lys-Gly) (interchain with G-Cter in ATG12) cross-link involves residue lysine 168. Over residues 219–230 (SSNSTQPSRPSS) the composition is skewed to low complexity. The segment at 219–241 (SSNSTQPSRPSSADPSGPPRAPD) is disordered.

This sequence belongs to the ATG5 family. Conjugated with ATG12. In terms of processing, conjugated to ATG12; which is essential for autophagy.

Its subcellular location is the preautophagosomal structure membrane. Its function is as follows. Involved in cytoplasm to vacuole transport (Cvt) and autophagic vesicle formation. Autophagy is essential for maintenance of amino acid levels and protein synthesis under nitrogen starvation. Required for selective autophagic degradation of the nucleus (nucleophagy). Also required for mitophagy, which eliminates defective or superfluous mitochondria in order to fulfill cellular energy requirements and prevent excess ROS production. Conjugation with ATG12, through a ubiquitin-like conjugating system involving ATG7 as an E1-like activating enzyme and ATG10 as an E2-like conjugating enzyme, is essential for its function. The ATG12-ATG5 conjugate acts as an E3-like enzyme which is required for lipidation of ATG8 and ATG8 association to the vesicle membranes. The polypeptide is Autophagy protein 5 (ATG5) (Cryptococcus neoformans var. neoformans serotype D (strain B-3501A) (Filobasidiella neoformans)).